Consider the following 1733-residue polypeptide: Desertorin synthase (1733 aa).

Positions arginine 21 to tryptophan 358 are N-terminal acylcarrier protein transacylase domain (SAT). A Ketosynthase family 3 (KS3) domain is found at aspartate 372–glutamate 799. A compositionally biased stretch (basic and acidic residues) spans histidine 406 to glycine 422. The segment at histidine 406–glutamine 429 is disordered. Active-site for beta-ketoacyl synthase activity residues include cysteine 544, histidine 679, and histidine 718. A malonyl-CoA:ACP transacylase (MAT) domain region spans residues phenylalanine 903–methionine 1211. The N-terminal hotdog fold stretch occupies residues histidine 1288 to serine 1420. The PKS/mFAS DH domain occupies histidine 1288–histidine 1598. The interval glycine 1299 to arginine 1594 is product template (PT) domain. The Proton acceptor; for dehydratase activity role is filled by histidine 1320. The C-terminal hotdog fold stretch occupies residues alanine 1448–histidine 1598. Residue aspartate 1506 is the Proton donor; for dehydratase activity of the active site. Residues histidine 1608–glutamine 1659 form a disordered region. Positions serine 1627–proline 1643 are enriched in low complexity. Residues glutamine 1659–leucine 1733 enclose the Carrier domain. O-(pantetheine 4'-phosphoryl)serine is present on serine 1696.

Pantetheine 4'-phosphate is required as a cofactor.

The protein operates within secondary metabolite biosynthesis. Non-reducing polyketide synthase; part of the gene cluster that mediates the biosynthesis of the bicoumarin desertorin. The non-reducing polyketide synthase desS first catalyzes the formation of the pentaketidic 4,7-dihydroxy-5-methylcoumarin from acetyl coenzyme A and 4 malonyl coenzyme A molecules. Further O-methylation by desB leads to the formation of 7-demethylsiderin. Then, an oxidative phenol coupling catalyzed by the cytochrome P450 monooxygenase desC forms the 6,8'-dimer M-desertorin A via dimerization the monomeric precursor, 7-demethylsiderin. M-desertorin A is further converted to M-desertorin C. This is Desertorin synthase from Aspergillus desertorum (Emericella desertorum).